A 346-amino-acid polypeptide reads, in one-letter code: Beta-hexosaminidase (346 aa).

Residues aspartate 62, arginine 70, arginine 134, and 164–165 contribute to the substrate site; that span reads KH. Histidine 177 acts as the Proton donor/acceptor in catalysis. The active-site Nucleophile is aspartate 249.

This sequence belongs to the glycosyl hydrolase 3 family. NagZ subfamily.

It is found in the cytoplasm. It carries out the reaction Hydrolysis of terminal non-reducing N-acetyl-D-hexosamine residues in N-acetyl-beta-D-hexosaminides.. Its pathway is cell wall biogenesis; peptidoglycan recycling. Its function is as follows. Plays a role in peptidoglycan recycling by cleaving the terminal beta-1,4-linked N-acetylglucosamine (GlcNAc) from peptide-linked peptidoglycan fragments, giving rise to free GlcNAc, anhydro-N-acetylmuramic acid and anhydro-N-acetylmuramic acid-linked peptides. The sequence is that of Beta-hexosaminidase from Actinobacillus succinogenes (strain ATCC 55618 / DSM 22257 / CCUG 43843 / 130Z).